The sequence spans 171 residues: Transcription antitermination protein NusB (171 aa).

This sequence belongs to the NusB family.

Its function is as follows. Involved in transcription antitermination. Required for transcription of ribosomal RNA (rRNA) genes. Binds specifically to the boxA antiterminator sequence of the ribosomal RNA (rrn) operons. In Pelodictyon phaeoclathratiforme (strain DSM 5477 / BU-1), this protein is Transcription antitermination protein NusB.